The sequence spans 160 residues: Eukaryotic translation initiation factor 5A-2 (160 aa).

Positions 1-12 (MSDEEHHFESKA) are enriched in basic and acidic residues. The segment at 1–21 (MSDEEHHFESKADAGASKTFP) is disordered. At Lys-52 the chain carries Hypusine.

It belongs to the eIF-5A family. Post-translationally, lys-52 undergoes hypusination, a unique post-translational modification that consists in the addition of a butylamino group from spermidine to lysine side chain, leading to the formation of the unusual amino acid hypusine. eIF-5As are the only known proteins to undergo this modification, which is essential for their function.

In terms of biological role, translation factor that promotes translation elongation and termination, particularly upon ribosome stalling at specific amino acid sequence contexts. Binds between the exit (E) and peptidyl (P) site of the ribosome and promotes rescue of stalled ribosome: specifically required for efficient translation of polyproline-containing peptides as well as other motifs that stall the ribosome. Acts as a ribosome quality control (RQC) cofactor by joining the RQC complex to facilitate peptidyl transfer during CAT tailing step. In Solanum lycopersicum (Tomato), this protein is Eukaryotic translation initiation factor 5A-2.